We begin with the raw amino-acid sequence, 97 residues long: Class II hydrophobin 3 (97 aa).

The signal sequence occupies residues 1-16 (MKFFAAAALFIAGVLA). Intrachain disulfides connect Cys-30/Cys-79, Cys-40/Cys-70, Cys-41/Cys-53, and Cys-80/Cys-91.

This sequence belongs to the cerato-ulmin hydrophobin family. As to quaternary structure, homodimer. Homodimers further self-assemble to form highly ordered films at water-air interfaces through intermolecular interactions.

Its subcellular location is the secreted. It localises to the cell wall. Its function is as follows. Aerial growth, conidiation, and dispersal of filamentous fungi in the environment rely upon a capability of their secreting small amphipathic proteins called hydrophobins (HPBs) with low sequence identity. Class I can self-assemble into an outermost layer of rodlet bundles on aerial cell surfaces, conferring cellular hydrophobicity that supports fungal growth, development and dispersal; whereas Class II form highly ordered films at water-air interfaces through intermolecular interactions but contribute nothing to the rodlet structure. The chain is Class II hydrophobin 3 from Trichoderma asperellum (strain ATCC 204424 / CBS 433.97 / NBRC 101777).